The chain runs to 261 residues: MSYTPGIGGDPAQLAQRISSNIQKITQCSAEIQRTLNQLGTPQDTPELRQQLQQEQQYTNQLAKETDKYIKEFGFLPTTPSEQRQRKIQKDRLVAEFTTALTNFQKVQRQAAEREKEFVARVRASSRVSGGFPEDSSKEKNFVSWESQTQPQVQVQDEEITEDDLRLIHERESSIRQLEADIMDINEIFKDLGMMIHEQGDVIDSIEANVESAEVHVQQANQQLSRAANYQRKSRKTLCIIILILVVGIVIIFFIVWGLKG.

The residue at position 2 (S2) is an N-acetylserine. Over 2–238 the chain is Cytoplasmic; it reads SYTPGIGGDP…NYQRKSRKTL (237 aa). The residue at position 4 (T4) is a Phosphothreonine. Residues 47–68 are a coiled coil; sequence ELRQQLQQEQQYTNQLAKETDK. T79 is modified (phosphothreonine). A phosphoserine mark is found at S125, S126, S129, and S205. Residues 128 to 148 form a disordered region; sequence VSGGFPEDSSKEKNFVSWESQ. The 63-residue stretch at 165–227 folds into the t-SNARE coiled-coil homology domain; sequence LRLIHERESS…QQANQQLSRA (63 aa). Residues 239-259 form a helical; Anchor for type IV membrane protein membrane-spanning segment; the sequence is CIIILILVVGIVIIFFIVWGL. The Vesicular segment spans residues 260 to 261; sequence KG.

It belongs to the syntaxin family. Interacts with VPS11, VPS16 and VPS18. Interacts with VPS33A. Forms a SNARE complex with VTI1B, STX8 and VAMP8 which functions in the homotypic fusion of late endosomes. Component of the SNARE complex composed of STX7, STX8, VAMP7 and VTI1B that is required for heterotypic fusion of late endosomes with lysosomes. Interacts with TPC1. Detected in all tissues tested. Highest expression is found in kidney followed by lung, spleen, heart and brain. Lower expression, in skeletal muscle, liver and testis.

Its subcellular location is the early endosome membrane. Its function is as follows. May be involved in protein trafficking from the plasma membrane to the early endosome (EE) as well as in homotypic fusion of endocytic organelles. Mediates the endocytic trafficking from early endosomes to late endosomes and lysosomes. The chain is Syntaxin-7 (Stx7) from Rattus norvegicus (Rat).